The sequence spans 111 residues: Large ribosomal subunit protein uL22 (111 aa).

It belongs to the universal ribosomal protein uL22 family. Part of the 50S ribosomal subunit.

Its function is as follows. This protein binds specifically to 23S rRNA; its binding is stimulated by other ribosomal proteins, e.g. L4, L17, and L20. It is important during the early stages of 50S assembly. It makes multiple contacts with different domains of the 23S rRNA in the assembled 50S subunit and ribosome. In terms of biological role, the globular domain of the protein is located near the polypeptide exit tunnel on the outside of the subunit, while an extended beta-hairpin is found that lines the wall of the exit tunnel in the center of the 70S ribosome. This chain is Large ribosomal subunit protein uL22, found in Wigglesworthia glossinidia brevipalpis.